Here is a 432-residue protein sequence, read N- to C-terminus: Transcriptional adapter 3 (432 aa).

Residue Lys21 forms a Glycyl lysine isopeptide (Lys-Gly) (interchain with G-Cter in SUMO2) linkage. Residues 40 to 69 (IEELDTLQLELETLLSSASRRLRVLEAETQ) adopt a coiled-coil conformation. The tract at residues 87–126 (GRDHELGAPPKHGKPKKQKLEGKAGHGPGPGPGRPKSKNL) is disordered. Residue Lys129 forms a Glycyl lysine isopeptide (Lys-Gly) (interchain with G-Cter in SUMO2) linkage. The tract at residues 272–319 (NIISPMEDSPIPDMSGKESGADGASTSPRNQNKPFSVPHTKSLESRIK) is disordered. A phosphoserine mark is found at Ser280 and Ser298. Residues 295-305 (ASTSPRNQNKP) show a composition bias toward polar residues. Residues 367 to 407 (LLRLAKEEVSRQELRQRVRMADNEVMDAFRKIMAARQKKRT) adopt a coiled-coil conformation. The residue at position 418 (Lys418) is an N6-acetyllysine.

Belongs to the NGG1 family. In terms of assembly, the PCAF complex is composed of a number of TBP-associated factors (TAFS), such as TAF5, TAF5L, TAF6, TAF6L, TAF9, TAF10 and TAF12, PCAF, and also PCAF-associated factors (PAFs), such as TADA2L/ADA2, TADA3L/ADA3 and SPT3. Interacts directly with TADA2L and PCAF and also with the high-risk HPV oncoprotein E6. Component of the STAGA transcription coactivator-HAT complex, at least composed of SUPT3H, GCN5L2, TAF5L, TAF6L, SUPT7L, TADA3L, TAD1L, TAF10, TAF12, TRRAP and TAF9. Component of the TFTC-HAT complex. Component of the ADA2A-containing complex (ATAC), composed of KAT14, KAT2A, TADA2L, TADA3L, ZZ3, MBIP, WDR5, YEATS2, CCDC101 and DR1. Ubiquitously expressed.

The protein localises to the nucleus. Functionally, functions as a component of the PCAF complex. The PCAF complex is capable of efficiently acetylating histones in a nucleosomal context. The PCAF complex could be considered as the human version of the yeast SAGA complex. Also known as a coactivator for p53/TP53-dependent transcriptional activation. Component of the ATAC complex, a complex with histone acetyltransferase activity on histones H3 and H4. This is Transcriptional adapter 3 (TADA3) from Homo sapiens (Human).